A 62-amino-acid polypeptide reads, in one-letter code: Potassium channel toxin gamma-KTx 1.1 (62 aa).

The signal sequence occupies residues Met1 to Met20. 4 disulfide bridges follow: Cys25–Cys43, Cys31–Cys54, Cys40–Cys59, and Cys44–Cys61.

Belongs to the ergtoxin family. Gamma-KTx 1 subfamily. Post-translationally, after protein storage at -20 Celsius degrees during a couple of months, the Met-55 of a small number of toxins is naturally oxidized. This oxidized form is about three orders of magnitude less efficient (IC(50)=15 uM) than non-oxidized form. In terms of tissue distribution, expressed by the venom gland.

The protein resides in the secreted. In terms of biological role, blocks human and rat Kv11.1/KCNH2/ERG1 and Kv11.3/KCNH7/ERG3, as well as rat (but not human) Kv11.2/KCNH6/ERG2 by binding to channel outer vestibule (S5P domain) with a 1:1 stoichiometry. Inhibition data are the following: hERG1 (reversible, IC(50)~7 nM), rERG1 (reversible, Kd=6.8 nM), rERG2 (irreversible, Kd=2.8 nM), hERG3 (irreversible, Kd=4.05 nM) and rERG3 (reversible, Kd=38.1 nM) potassium channels. The toxin potency is not affected by elevating potassium ion concentration from 2 to 98 mM. This toxin only blocks channels in a closed state. At high toxin concentrations, block of Kv11.1/KCNH2/ERG1 macroscopic current is incomplete (93.5%). This suggests a kinetic mechanism model with two different states of toxin-channel binding (T+C=TC*=TC; in the TC* state, the toxin binds the channel but does not occlude the pore, whereas in the TC state the toxin binds and occludes the pore). In this model, incomplete block is explained by the relatively fast dissociation rate from the blocked channel conformation (TC) relative to the rate of conversion of the toxin-channel encounter complex (TC*) to the blocked channel conformation (TC). This Centruroides noxius (Mexican scorpion) protein is Potassium channel toxin gamma-KTx 1.1.